Reading from the N-terminus, the 436-residue chain is UPF0597 protein YhaM (436 aa).

The protein belongs to the UPF0597 family.

The sequence is that of UPF0597 protein YhaM from Shigella boydii serotype 4 (strain Sb227).